A 232-amino-acid polypeptide reads, in one-letter code: Large ribosomal subunit protein uL1 (232 aa).

Belongs to the universal ribosomal protein uL1 family. In terms of assembly, part of the 50S ribosomal subunit.

In terms of biological role, binds directly to 23S rRNA. The L1 stalk is quite mobile in the ribosome, and is involved in E site tRNA release. Functionally, protein L1 is also a translational repressor protein, it controls the translation of the L11 operon by binding to its mRNA. In Rhizorhabdus wittichii (strain DSM 6014 / CCUG 31198 / JCM 15750 / NBRC 105917 / EY 4224 / RW1) (Sphingomonas wittichii), this protein is Large ribosomal subunit protein uL1.